The chain runs to 154 residues: Large ribosomal subunit protein uL22 (154 aa).

The protein belongs to the universal ribosomal protein uL22 family. Part of the 50S ribosomal subunit.

Its function is as follows. This protein binds specifically to 23S rRNA. It makes multiple contacts with different domains of the 23S rRNA in the assembled 50S subunit and ribosome. In terms of biological role, the globular domain of the protein is located near the polypeptide exit tunnel on the outside of the subunit, while an extended beta-hairpin is found that lines the wall of the exit tunnel in the center of the 70S ribosome. The chain is Large ribosomal subunit protein uL22 from Natronomonas pharaonis (strain ATCC 35678 / DSM 2160 / CIP 103997 / JCM 8858 / NBRC 14720 / NCIMB 2260 / Gabara) (Halobacterium pharaonis).